Consider the following 342-residue polypeptide: Dihydroorotase (342 aa).

Zn(2+) contacts are provided by H13 and H15. Residues H15–R17 and N41 each bind substrate. Positions 98, 135, and 173 each coordinate Zn(2+). K98 carries the post-translational modification N6-carboxylysine. H135 serves as a coordination point for substrate. L218 contributes to the substrate binding site. A Zn(2+)-binding site is contributed by D246. The active site involves D246. The substrate site is built by H250 and A262.

This sequence belongs to the metallo-dependent hydrolases superfamily. DHOase family. Class II DHOase subfamily. As to quaternary structure, homodimer. It depends on Zn(2+) as a cofactor.

It carries out the reaction (S)-dihydroorotate + H2O = N-carbamoyl-L-aspartate + H(+). Its pathway is pyrimidine metabolism; UMP biosynthesis via de novo pathway; (S)-dihydroorotate from bicarbonate: step 3/3. Its function is as follows. Catalyzes the reversible cyclization of carbamoyl aspartate to dihydroorotate. The protein is Dihydroorotase of Vibrio campbellii (strain ATCC BAA-1116).